The primary structure comprises 241 residues: Adenosylcobinamide-GDP ribazoletransferase (241 aa).

The next 4 membrane-spanning stretches (helical) occupy residues 34 to 54 (LGLP…AWAF), 108 to 128 (VGGL…FGWI), 184 to 206 (LPFS…WTCL), and 220 to 240 (FLGA…SSLP).

Belongs to the CobS family. Mg(2+) is required as a cofactor.

It localises to the cell membrane. The catalysed reaction is alpha-ribazole + adenosylcob(III)inamide-GDP = adenosylcob(III)alamin + GMP + H(+). The enzyme catalyses alpha-ribazole 5'-phosphate + adenosylcob(III)inamide-GDP = adenosylcob(III)alamin 5'-phosphate + GMP + H(+). It functions in the pathway cofactor biosynthesis; adenosylcobalamin biosynthesis; adenosylcobalamin from cob(II)yrinate a,c-diamide: step 7/7. In terms of biological role, joins adenosylcobinamide-GDP and alpha-ribazole to generate adenosylcobalamin (Ado-cobalamin). Also synthesizes adenosylcobalamin 5'-phosphate from adenosylcobinamide-GDP and alpha-ribazole 5'-phosphate. The protein is Adenosylcobinamide-GDP ribazoletransferase of Methanopyrus kandleri (strain AV19 / DSM 6324 / JCM 9639 / NBRC 100938).